We begin with the raw amino-acid sequence, 290 residues long: Agmatinase (290 aa).

Positions 112, 135, 137, 139, 216, and 218 each coordinate Mn(2+).

It belongs to the arginase family. Agmatinase subfamily. Mn(2+) is required as a cofactor.

The enzyme catalyses agmatine + H2O = urea + putrescine. It participates in amine and polyamine biosynthesis; putrescine biosynthesis via agmatine pathway; putrescine from agmatine: step 1/1. Its function is as follows. Catalyzes the formation of putrescine from agmatine. This is Agmatinase (speB) from Bacillus subtilis (strain 168).